Reading from the N-terminus, the 251-residue chain is MNLISIPAFQDNYIWLLADEQKHCVIVDPGESAPVLAALSQGQYLPQAILLTHHHNDHVGGVADLRRHFPEIPVYGPQETANKGATIMVTGGDHLSIGGQNYQVIAVPGHTLEHIAYYSKPYLFCGDTLFSAGCGRLFEGTPAQMYASIQQLAQLPDETLICSAHEYTLANLKFARFILPSDQDIATYQQQIMQLRAKNQPSLPVKLQIERKINVFLRCDDIDLQRKIGVISPPNSLVSVFSELRAQKDRF.

Zn(2+) is bound by residues His-53, His-55, Asp-57, His-58, His-110, Asp-127, and His-165.

The protein belongs to the metallo-beta-lactamase superfamily. Glyoxalase II family. Monomer. Zn(2+) serves as cofactor.

It carries out the reaction an S-(2-hydroxyacyl)glutathione + H2O = a 2-hydroxy carboxylate + glutathione + H(+). It functions in the pathway secondary metabolite metabolism; methylglyoxal degradation; (R)-lactate from methylglyoxal: step 2/2. In terms of biological role, thiolesterase that catalyzes the hydrolysis of S-D-lactoyl-glutathione to form glutathione and D-lactic acid. The sequence is that of Hydroxyacylglutathione hydrolase from Yersinia enterocolitica serotype O:8 / biotype 1B (strain NCTC 13174 / 8081).